The chain runs to 446 residues: Chromosomal replication initiator protein DnaA (446 aa).

The domain I, interacts with DnaA modulators stretch occupies residues 1 to 73 (MAAQLNELWQ…INSMKIITTK (73 aa)). The domain II stretch occupies residues 73–107 (KKYDIAFLISSEEALETDEDQETDTNNVNTDTSSS). The domain III, AAA+ region stretch occupies residues 108–324 (MLNPKYKFDS…GALIRIVAFS (217 aa)). The ATP site is built by G152, G154, K155, and T156. The tract at residues 325–446 (SLTNKEISVD…NEITKRFSPK (122 aa)) is domain IV, binds dsDNA.

Belongs to the DnaA family. In terms of assembly, oligomerizes as a right-handed, spiral filament on DNA at oriC.

The protein localises to the cytoplasm. Plays an essential role in the initiation and regulation of chromosomal replication. ATP-DnaA binds to the origin of replication (oriC) to initiate formation of the DNA replication initiation complex once per cell cycle. Binds the DnaA box (a 9 base pair repeat at the origin) and separates the double-stranded (ds)DNA. Forms a right-handed helical filament on oriC DNA; dsDNA binds to the exterior of the filament while single-stranded (ss)DNA is stabiized in the filament's interior. The ATP-DnaA-oriC complex binds and stabilizes one strand of the AT-rich DNA unwinding element (DUE), permitting loading of DNA polymerase. After initiation quickly degrades to an ADP-DnaA complex that is not apt for DNA replication. Binds acidic phospholipids. The protein is Chromosomal replication initiator protein DnaA of Clostridium acetobutylicum (strain ATCC 824 / DSM 792 / JCM 1419 / IAM 19013 / LMG 5710 / NBRC 13948 / NRRL B-527 / VKM B-1787 / 2291 / W).